The chain runs to 444 residues: tRNA modification GTPase MnmE (444 aa).

Residues R23, E82, and K121 each coordinate (6S)-5-formyl-5,6,7,8-tetrahydrofolate. Residues 216-365 (GTSIVLAGLP…LKQALQKWLN (150 aa)) form the TrmE-type G domain. N226 contributes to the K(+) binding site. GTP is bound by residues 226-231 (NAGKSS), 245-251 (TDIPGTT), and 270-273 (DSAG). S230 lines the Mg(2+) pocket. K(+) is bound by residues T245, I247, and T250. T251 is a binding site for Mg(2+). Residue K444 participates in (6S)-5-formyl-5,6,7,8-tetrahydrofolate binding.

It belongs to the TRAFAC class TrmE-Era-EngA-EngB-Septin-like GTPase superfamily. TrmE GTPase family. Homodimer. Heterotetramer of two MnmE and two MnmG subunits. K(+) is required as a cofactor.

The protein resides in the cytoplasm. Exhibits a very high intrinsic GTPase hydrolysis rate. Involved in the addition of a carboxymethylaminomethyl (cmnm) group at the wobble position (U34) of certain tRNAs, forming tRNA-cmnm(5)s(2)U34. This is tRNA modification GTPase MnmE from Chlamydia trachomatis serovar L2 (strain ATCC VR-902B / DSM 19102 / 434/Bu).